A 132-amino-acid polypeptide reads, in one-letter code: S-protein homolog 15 (132 aa).

The signal sequence occupies residues 1–20 (MSRLIFFILVTAIYFVGNEA).

The protein belongs to the plant self-incompatibility (S1) protein family.

The protein resides in the secreted. This Arabidopsis thaliana (Mouse-ear cress) protein is S-protein homolog 15.